The following is a 274-amino-acid chain: Hematopoietically-expressed homeobox protein hhex (274 aa).

The segment at residues 139-198 (RKGGQVRFSNDQTIELEKKFETQKYLSPPERKRLAKMLQLSERQVKTWFQNRRAKWRRLK) is a DNA-binding region (homeobox). Residues 197–274 (LKQENPQGNK…GDKGFYNCAH (78 aa)) are disordered. Over residues 237-248 (DEPTSSPTSQET) the composition is skewed to polar residues. A compositionally biased stretch (acidic residues) spans 249 to 263 (LDSEVSDDSDQEVDI).

In terms of tissue distribution, expressed in the most dorsoanterior endomesoderm of the blastula and gastrula embryo, and later is restricted to the forming liver diverticulum.

The protein resides in the nucleus. Its function is as follows. Recognizes the DNA sequence 5'-ATTAA-3'. Transcriptional repressor. Regulates the differentiation of both endothelial and blood cells. Probably plays a role in the proliferation of vascular endothelial cells during blood vessel development. Establishes anterior identity at two levels; acts early to enhance canonical wnt-signaling by repressing expression of tle4, and acts later to inhibit nodal-signaling by directly targeting nodal/nr1 and nodal2/nr2. May play a role in liver development. Induces heart development. The chain is Hematopoietically-expressed homeobox protein hhex from Xenopus tropicalis (Western clawed frog).